Consider the following 534-residue polypeptide: Apolipoprotein N-acyltransferase (534 aa).

The next 7 helical transmembrane spans lie at 8-28, 31-51, 69-89, 105-125, 127-147, 178-198, and 208-228; these read VILVWGFKRSLLAIGAGAFAV, LPPFGFFAAMFLSFTLLVWLI, AFAVGWLFGFGYFVAGLWWLG, LAILGLPACLAIFYGLAVALA, IFWSDGMGRIAALAAGFGLME, VIGAMGVTALAVFVFSAPALF, and VALAVLLFAAHLGYGAYALYL. One can recognise a CN hydrolase domain in the interval 246 to 496; sequence VQPDIDQAAK…TGFIDATVDS (251 aa). Catalysis depends on Glu291, which acts as the Proton acceptor. Residue Lys355 is part of the active site. The active-site Nucleophile is the Cys408. The chain crosses the membrane as a helical span at residues 511-531; sequence FWLTEALLILIALISREGFIF.

It belongs to the CN hydrolase family. Apolipoprotein N-acyltransferase subfamily.

The protein resides in the cell inner membrane. It catalyses the reaction N-terminal S-1,2-diacyl-sn-glyceryl-L-cysteinyl-[lipoprotein] + a glycerophospholipid = N-acyl-S-1,2-diacyl-sn-glyceryl-L-cysteinyl-[lipoprotein] + a 2-acyl-sn-glycero-3-phospholipid + H(+). Its pathway is protein modification; lipoprotein biosynthesis (N-acyl transfer). Catalyzes the phospholipid dependent N-acylation of the N-terminal cysteine of apolipoprotein, the last step in lipoprotein maturation. The protein is Apolipoprotein N-acyltransferase of Rhizobium etli (strain CIAT 652).